A 446-amino-acid polypeptide reads, in one-letter code: D-inositol 3-phosphate glycosyltransferase (446 aa).

H19 lines the 1D-myo-inositol 3-phosphate pocket. Residues 25 to 26 (QP) and G33 contribute to the UDP-N-acetyl-alpha-D-glucosamine site. 1D-myo-inositol 3-phosphate contacts are provided by residues 30 to 35 (DAGGMN), K88, Y121, T145, and R165. 3 residues coordinate UDP-N-acetyl-alpha-D-glucosamine: R239, K244, and Q303. Positions 312, 313, and 315 each coordinate Mg(2+). UDP-N-acetyl-alpha-D-glucosamine contacts are provided by E325 and E333. T339 provides a ligand contact to Mg(2+).

Belongs to the glycosyltransferase group 1 family. MshA subfamily. As to quaternary structure, homodimer.

The catalysed reaction is 1D-myo-inositol 3-phosphate + UDP-N-acetyl-alpha-D-glucosamine = 1D-myo-inositol 2-acetamido-2-deoxy-alpha-D-glucopyranoside 3-phosphate + UDP + H(+). Functionally, catalyzes the transfer of a N-acetyl-glucosamine moiety to 1D-myo-inositol 3-phosphate to produce 1D-myo-inositol 2-acetamido-2-deoxy-glucopyranoside 3-phosphate in the mycothiol biosynthesis pathway. This chain is D-inositol 3-phosphate glycosyltransferase, found in Rhodococcus opacus (strain B4).